Reading from the N-terminus, the 307-residue chain is MNKKDHLRKDEEVSTTNSLVAGSLSGLFARTCIAPLDTVKIKLQVTPHNKNANVLINILKREGIRGFWKGNVPGSIMYIIYGGAQFGSYTYIGSFLRGGLDLNISPQLYSCLVGSLAGMTSSLASYPFDVLRTRFAANSQGQLIKLRDEIMAIWSHEGLMGFFSGCGSSMINIGLNTAIMFGVYESIKIFTEERSKLSDRRDPFTLLNELAGPISGFTSKLATFPLDTVRRRIQIRNSPNEERHDREFTKDIYKSYKNRRFLGVGISMVQQEGPLSLYRGVTMSLIKSVPSTAISLWSYELFMNKLG.

3 Solcar repeats span residues 13-95, 105-190, and 203-305; these read VSTT…IGSF, SPQL…IKIF, and PFTL…FMNK. Transmembrane regions (helical) follow at residues 19–36, 76–96, 108–126, 160–184, 210–226, and 280–297; these read LVAG…IAPL, IMYI…GSFL, LYSC…LASY, MGFF…FGVY, LAGP…TFPL, and GVTM…ISLW.

Belongs to the mitochondrial carrier (TC 2.A.29) family.

The protein localises to the mitochondrion inner membrane. Its function is as follows. Mitochondrial transporter that mediates uptake of thiamine pyrophosphate (ThPP) into mitochondria. The protein is Mitochondrial thiamine pyrophosphate carrier 1 (TPC1) of Candida glabrata (strain ATCC 2001 / BCRC 20586 / JCM 3761 / NBRC 0622 / NRRL Y-65 / CBS 138) (Yeast).